Reading from the N-terminus, the 103-residue chain is Large ribosomal subunit protein bL21 (103 aa).

The protein belongs to the bacterial ribosomal protein bL21 family. Part of the 50S ribosomal subunit. Contacts protein L20.

Its function is as follows. This protein binds to 23S rRNA in the presence of protein L20. This chain is Large ribosomal subunit protein bL21, found in Polynucleobacter necessarius subsp. necessarius (strain STIR1).